Here is a 353-residue protein sequence, read N- to C-terminus: MTEPLKPRIDFDGPLDVDQNPEFRAQQTFDENQAQNFAPATLDEAPEEEGQVEAVMDAALRPKRSLWRKMVMGGLALFGASVVGQGVQWTMNAWQTQDWVALGGCAAGALIIGAGVGSVVTEWRRLWRLRQRAHERDEARDLLHSHGTGKGRAFCEKLAQQAGIDQSHPALQRWYASIHETQNDREVVSLYAHLVQPVLDAQARREISRSAAESTLMIAVSPLALVDMAFIAWRNLRLINRIATLYGIELGYYSRLRLFKLVLLNIAFAGASELVREVGMDWMSQDLAARLSTRAAQGIGAGLLTARLGIKAMELCRPLPWLDDDKPRLGDFRRQLIGQVKETLQKGKTPSEK.

Helical transmembrane passes span 70–90, 100–120, and 213–233; these read MVMGGLALFGASVVGQGVQWT, VALGGCAAGALIIGAGVGSVV, and ESTLMIAVSPLALVDMAFIAW.

Belongs to the UPF0283 family.

It is found in the cell inner membrane. The polypeptide is UPF0283 membrane protein YcjF (Escherichia coli O7:K1 (strain IAI39 / ExPEC)).